The chain runs to 229 residues: MYDISGWKHVFKLDPNKELSDEHLEMICESGTDAVIVGGSDGVTIDNVLHMLVSIRRYAVPCVLEVSDVEAITPGFDFYYIPSVLNSRKVEWVTGVHHEALKEFGDIMDWDEIFMEGYCVLNPEAKVAQLTEAKCDVTEDDVIAYARLADKLLRLPIFYLEYSGTYGDVELVKNVKAELKQAKLYYGGGISNAEQAKEMAQYADTVVVGNIIYDDIKSALKTVKAVKGE.

Residue lysine 12 coordinates sn-glycerol 1-phosphate. 2 residues coordinate Mg(2+): aspartate 14 and serine 40. Sn-glycerol 1-phosphate is bound by residues 159 to 164 (YLEYSG), glycine 189, and 209 to 210 (GN).

The protein belongs to the GGGP/HepGP synthase family. Group I subfamily. Homodimer. It depends on Mg(2+) as a cofactor.

It catalyses the reaction sn-glycerol 1-phosphate + all-trans-heptaprenyl diphosphate = 3-heptaprenyl-sn-glycero-1-phosphate + diphosphate. It participates in membrane lipid metabolism; glycerophospholipid metabolism. Prenyltransferase that catalyzes in vivo the transfer of the heptaprenyl moiety of heptaprenyl pyrophosphate (HepPP; 35 carbon atoms) to the C3 hydroxyl of sn-glycerol-1-phosphate (G1P), producing heptaprenylglyceryl phosphate (HepGP). This reaction is an ether-bond-formation step in the biosynthesis of archaea-type G1P-based membrane lipids found in Bacillales. The chain is Heptaprenylglyceryl phosphate synthase from Bacillus cereus (strain B4264).